The following is a 397-amino-acid chain: Acetate kinase (397 aa).

Asn-8 contacts Mg(2+). Position 15 (Lys-15) interacts with ATP. Residue Arg-89 participates in substrate binding. Catalysis depends on Asp-146, which acts as the Proton donor/acceptor. Residues 206–210 (HLGNG), 281–283 (DLR), and 329–333 (GVGEN) each bind ATP. Glu-382 serves as a coordination point for Mg(2+).

The protein belongs to the acetokinase family. Homodimer. It depends on Mg(2+) as a cofactor. Mn(2+) serves as cofactor.

The protein localises to the cytoplasm. The catalysed reaction is acetate + ATP = acetyl phosphate + ADP. It functions in the pathway metabolic intermediate biosynthesis; acetyl-CoA biosynthesis; acetyl-CoA from acetate: step 1/2. Functionally, catalyzes the formation of acetyl phosphate from acetate and ATP. Can also catalyze the reverse reaction. The sequence is that of Acetate kinase from Bacillus cereus (strain ATCC 10987 / NRS 248).